The primary structure comprises 592 residues: NADH-quinone oxidoreductase subunit C/D (592 aa).

The segment at 1–183 is NADH dehydrogenase I subunit C; sequence MSAAQSPTAQ…DPYTLTVEGQ (183 aa). The interval 207–592 is NADH dehydrogenase I subunit D; sequence DYMFLNLGPN…IDFVMADVDR (386 aa).

It in the N-terminal section; belongs to the complex I 30 kDa subunit family. The protein in the C-terminal section; belongs to the complex I 49 kDa subunit family. As to quaternary structure, NDH-1 is composed of 13 different subunits. Subunits NuoB, CD, E, F, and G constitute the peripheral sector of the complex.

The protein resides in the cell inner membrane. The enzyme catalyses a quinone + NADH + 5 H(+)(in) = a quinol + NAD(+) + 4 H(+)(out). Its function is as follows. NDH-1 shuttles electrons from NADH, via FMN and iron-sulfur (Fe-S) centers, to quinones in the respiratory chain. The immediate electron acceptor for the enzyme in this species is believed to be ubiquinone. Couples the redox reaction to proton translocation (for every two electrons transferred, four hydrogen ions are translocated across the cytoplasmic membrane), and thus conserves the redox energy in a proton gradient. This chain is NADH-quinone oxidoreductase subunit C/D, found in Chromohalobacter salexigens (strain ATCC BAA-138 / DSM 3043 / CIP 106854 / NCIMB 13768 / 1H11).